We begin with the raw amino-acid sequence, 100 residues long: NAD(P)H-quinone oxidoreductase subunit 4L, chloroplastic (100 aa).

3 consecutive transmembrane segments (helical) span residues 1–21 (MLEHALILGAYLFSIGIYGLV), 31–51 (MCLELILNAVNLNLVTFSNFF), and 63–83 (IFVIAIAAAEAAIGLAIVLAI).

Belongs to the complex I subunit 4L family. NDH is composed of at least 16 different subunits, 5 of which are encoded in the nucleus.

The protein localises to the plastid. Its subcellular location is the chloroplast thylakoid membrane. The enzyme catalyses a plastoquinone + NADH + (n+1) H(+)(in) = a plastoquinol + NAD(+) + n H(+)(out). It catalyses the reaction a plastoquinone + NADPH + (n+1) H(+)(in) = a plastoquinol + NADP(+) + n H(+)(out). Functionally, NDH shuttles electrons from NAD(P)H:plastoquinone, via FMN and iron-sulfur (Fe-S) centers, to quinones in the photosynthetic chain and possibly in a chloroplast respiratory chain. The immediate electron acceptor for the enzyme in this species is believed to be plastoquinone. Couples the redox reaction to proton translocation, and thus conserves the redox energy in a proton gradient. The sequence is that of NAD(P)H-quinone oxidoreductase subunit 4L, chloroplastic from Cryptomeria japonica (Japanese cedar).